We begin with the raw amino-acid sequence, 126 residues long: Hydrogenase maturation factor HypA (126 aa).

Histidine 2 contacts Ni(2+). Zn(2+) is bound by residues cysteine 78, cysteine 81, cysteine 97, and cysteine 100.

The protein belongs to the HypA/HybF family.

Functionally, involved in the maturation of [NiFe] hydrogenases. Required for nickel insertion into the metal center of the hydrogenase. This chain is Hydrogenase maturation factor HypA, found in Methanococcus maripaludis (strain C7 / ATCC BAA-1331).